A 135-amino-acid polypeptide reads, in one-letter code: Large ribosomal subunit protein uL16c (135 aa).

Belongs to the universal ribosomal protein uL16 family. As to quaternary structure, part of the 50S ribosomal subunit.

It localises to the plastid. Its subcellular location is the chloroplast. The sequence is that of Large ribosomal subunit protein uL16c from Piper cenocladum (Ant piper).